The chain runs to 370 residues: Cytochrome b (370 aa).

4 consecutive transmembrane segments (helical) span residues 25–45 (FGSMLIACSTLQVLTGFFLAV), 69–90 (WLMQNLHAIGASMFFICIYIHI), 105–125 (WLSGTTLLIMLMATAFFGYVL), and 170–190 (FFALHFILPFGIISMSSLHVM). Heme b-binding residues include H75 and H89. Positions 174 and 188 each coordinate heme b. A ubiquinone is bound at residue H193. A run of 4 helical transmembrane segments spans residues 218–238 (YKDLLMLAAMTTLLLLIVSFS), 280–300 (LGGALALTMSIVILLTVPFTH), 312–332 (FMQMTFWLFAATFMVITWTAT), and 339–358 (FTLIGQAASMIYFLFFISNP).

Belongs to the cytochrome b family. The cytochrome bc1 complex contains 3 respiratory subunits (MT-CYB, CYC1 and UQCRFS1), 2 core proteins (UQCRC1 and UQCRC2) and probably 6 low-molecular weight proteins. It depends on heme b as a cofactor.

It is found in the mitochondrion inner membrane. Its function is as follows. Component of the ubiquinol-cytochrome c reductase complex (complex III or cytochrome b-c1 complex) that is part of the mitochondrial respiratory chain. The b-c1 complex mediates electron transfer from ubiquinol to cytochrome c. Contributes to the generation of a proton gradient across the mitochondrial membrane that is then used for ATP synthesis. The sequence is that of Cytochrome b (MT-CYB) from Eunectes notaeus (Yellow anaconda).